We begin with the raw amino-acid sequence, 325 residues long: Phosphatidylglycerol--prolipoprotein diacylglyceryl transferase (325 aa).

4 consecutive transmembrane segments (helical) span residues isoleucine 19–glycine 39, glycine 47–glycine 67, isoleucine 93–isoleucine 113, and glycine 119–isoleucine 139. Residue arginine 141 coordinates a 1,2-diacyl-sn-glycero-3-phospho-(1'-sn-glycerol). Helical transmembrane passes span histidine 175–alanine 195, phenylalanine 207–arginine 225, and leucine 237–alanine 257. Positions isoleucine 266–threonine 312 are enriched in basic and acidic residues. The interval isoleucine 266–alanine 325 is disordered. Residues alanine 313–alanine 325 show a composition bias toward low complexity.

It belongs to the Lgt family.

Its subcellular location is the cell membrane. The enzyme catalyses L-cysteinyl-[prolipoprotein] + a 1,2-diacyl-sn-glycero-3-phospho-(1'-sn-glycerol) = an S-1,2-diacyl-sn-glyceryl-L-cysteinyl-[prolipoprotein] + sn-glycerol 1-phosphate + H(+). It functions in the pathway protein modification; lipoprotein biosynthesis (diacylglyceryl transfer). Its function is as follows. Catalyzes the transfer of the diacylglyceryl group from phosphatidylglycerol to the sulfhydryl group of the N-terminal cysteine of a prolipoprotein, the first step in the formation of mature lipoproteins. The sequence is that of Phosphatidylglycerol--prolipoprotein diacylglyceryl transferase from Streptomyces griseus subsp. griseus (strain JCM 4626 / CBS 651.72 / NBRC 13350 / KCC S-0626 / ISP 5235).